The following is a 192-amino-acid chain: Fe/S biogenesis protein NfuA (192 aa).

[4Fe-4S] cluster contacts are provided by cysteine 149 and cysteine 152.

This sequence belongs to the NfuA family. Homodimer. [4Fe-4S] cluster is required as a cofactor.

In terms of biological role, involved in iron-sulfur cluster biogenesis. Binds a 4Fe-4S cluster, can transfer this cluster to apoproteins, and thereby intervenes in the maturation of Fe/S proteins. Could also act as a scaffold/chaperone for damaged Fe/S proteins. The polypeptide is Fe/S biogenesis protein NfuA (Shewanella pealeana (strain ATCC 700345 / ANG-SQ1)).